We begin with the raw amino-acid sequence, 139 residues long: S-adenosylmethionine decarboxylase proenzyme (139 aa).

The active-site Schiff-base intermediate with substrate; via pyruvic acid is serine 63. At serine 63 the chain carries Pyruvic acid (Ser); by autocatalysis. Histidine 68 functions as the Proton acceptor; for processing activity in the catalytic mechanism. Catalysis depends on cysteine 83, which acts as the Proton donor; for catalytic activity.

The protein belongs to the prokaryotic AdoMetDC family. Type 1 subfamily. Heterotetramer of two alpha and two beta chains arranged as a dimer of alpha/beta heterodimers. Pyruvate serves as cofactor. In terms of processing, is synthesized initially as an inactive proenzyme. Formation of the active enzyme involves a self-maturation process in which the active site pyruvoyl group is generated from an internal serine residue via an autocatalytic post-translational modification. Two non-identical subunits are generated from the proenzyme in this reaction, and the pyruvate is formed at the N-terminus of the alpha chain, which is derived from the carboxyl end of the proenzyme. The post-translation cleavage follows an unusual pathway, termed non-hydrolytic serinolysis, in which the side chain hydroxyl group of the serine supplies its oxygen atom to form the C-terminus of the beta chain, while the remainder of the serine residue undergoes an oxidative deamination to produce ammonia and the pyruvoyl group blocking the N-terminus of the alpha chain.

It catalyses the reaction S-adenosyl-L-methionine + H(+) = S-adenosyl 3-(methylsulfanyl)propylamine + CO2. It functions in the pathway amine and polyamine biosynthesis; S-adenosylmethioninamine biosynthesis; S-adenosylmethioninamine from S-adenosyl-L-methionine: step 1/1. In terms of biological role, catalyzes the decarboxylation of S-adenosylmethionine to S-adenosylmethioninamine (dcAdoMet), the propylamine donor required for the synthesis of the polyamines spermine and spermidine from the diamine putrescine. This chain is S-adenosylmethionine decarboxylase proenzyme, found in Pyrococcus horikoshii (strain ATCC 700860 / DSM 12428 / JCM 9974 / NBRC 100139 / OT-3).